The chain runs to 207 residues: Nuclear transcription factor Y subunit beta (207 aa).

The segment at 1 to 52 is a domain; that stretch reads MTMDGDSSTTDASQLGISADYIGGSHYVIQPHDDTEDSMNDHEDTNGSKESF. Residues 27-52 are disordered; the sequence is YVIQPHDDTEDSMNDHEDTNGSKESF. Residues 39-52 show a composition bias toward basic and acidic residues; it reads MNDHEDTNGSKESF. A b domain region spans residues 53–142; the sequence is REQDIYLPIA…PLKLYLQKFR (90 aa). Residues 59–65 mediate DNA binding; the sequence is LPIANVA. Residues 86–97 form a subunit association domain (SAD) region; that stretch reads VQECVSEFISFI. Lys-140 is covalently cross-linked (Glycyl lysine isopeptide (Lys-Gly) (interchain with G-Cter in ubiquitin)). The segment at 143-207 is c domain; that stretch reads EAMKGEKGIG…ISGVQQIQFS (65 aa).

The protein belongs to the NFYB/HAP3 subunit family. As to quaternary structure, heterotrimeric transcription factor composed of three components, NF-YA, NF-YB and NF-YC. NF-YB and NF-YC must interact and dimerize for NF-YA association and DNA binding. Interacts with C1QBP. In terms of processing, monoubiquitination at Lys-140 plays an important role in transcriptional activation by allowing the deposition of histone H3 methylations as well as histone H2B monoubiquitination at 'Lys-121'.

The protein resides in the nucleus. Functionally, component of the sequence-specific heterotrimeric transcription factor (NF-Y) which specifically recognizes a 5'-CCAAT-3' box motif found in the promoters of its target genes. NF-Y can function as both an activator and a repressor, depending on its interacting cofactors. This Equus caballus (Horse) protein is Nuclear transcription factor Y subunit beta (NFYB).